The chain runs to 404 residues: tRNA-specific 2-thiouridylase MnmA (404 aa).

Residues 42–49 and Leu68 contribute to the ATP site; that span reads GLSGGVDS. The Nucleophile role is filled by Cys129. Cys129 and Cys239 are disulfide-bonded. Gly154 contacts ATP. The tract at residues 189–191 is interaction with tRNA; sequence KDQ. Cys239 serves as the catalytic Cysteine persulfide intermediate. The interaction with tRNA stretch occupies residues 344–345; that stretch reads RY.

The protein belongs to the MnmA/TRMU family.

The protein localises to the cytoplasm. The enzyme catalyses S-sulfanyl-L-cysteinyl-[protein] + uridine(34) in tRNA + AH2 + ATP = 2-thiouridine(34) in tRNA + L-cysteinyl-[protein] + A + AMP + diphosphate + H(+). In terms of biological role, catalyzes the 2-thiolation of uridine at the wobble position (U34) of tRNA, leading to the formation of s(2)U34. This chain is tRNA-specific 2-thiouridylase MnmA, found in Prochlorococcus marinus (strain NATL1A).